The primary structure comprises 527 residues: Aspartokinase (527 aa).

T333 is subject to Phosphothreonine. Residues 442–527 form the ACT domain; that stretch reads LVGKHMKQYI…RLEQLKRLGI (86 aa).

Belongs to the aspartokinase family. As to quaternary structure, homohexamer. Interacts with FPR1; the interaction is direct, plays a role in feedback inhibition of aspartokinase by threonine, and inhibited by tacrolimus and sirolimus.

The enzyme catalyses L-aspartate + ATP = 4-phospho-L-aspartate + ADP. It participates in amino-acid biosynthesis; L-methionine biosynthesis via de novo pathway; L-homoserine from L-aspartate: step 1/3. The protein operates within amino-acid biosynthesis; L-threonine biosynthesis; L-threonine from L-aspartate: step 1/5. With respect to regulation, allosterically inhibited by threonine. In terms of biological role, phosphorylates aspartate, the first step in the biosynthesis of amino acids that derive from aspartate (the aspartate family of amino acids), including methioinine and threonine, the latter of which is a precursor to isoleucine. In Saccharomyces cerevisiae (strain ATCC 204508 / S288c) (Baker's yeast), this protein is Aspartokinase (HOM3).